A 495-amino-acid chain; its full sequence is Cobyric acid synthase (495 aa).

The GATase cobBQ-type domain occupies 252 to 439; it reads RIRIAAPMLS…VHGLFAQDAF (188 aa). Cys-334 acts as the Nucleophile in catalysis. The active site involves His-431.

It belongs to the CobB/CobQ family. CobQ subfamily.

It functions in the pathway cofactor biosynthesis; adenosylcobalamin biosynthesis. In terms of biological role, catalyzes amidations at positions B, D, E, and G on adenosylcobyrinic A,C-diamide. NH(2) groups are provided by glutamine, and one molecule of ATP is hydrogenolyzed for each amidation. This chain is Cobyric acid synthase, found in Hyphomonas neptunium (strain ATCC 15444).